Here is a 657-residue protein sequence, read N- to C-terminus: 1-deoxy-D-xylulose-5-phosphate synthase (657 aa).

Residues histidine 73 and 113-115 each bind thiamine diphosphate; that span reads SHA. Aspartate 145 provides a ligand contact to Mg(2+). Thiamine diphosphate is bound by residues 146–147, asparagine 175, tyrosine 293, and glutamate 375; that span reads GA. Asparagine 175 is a Mg(2+) binding site.

This sequence belongs to the transketolase family. DXPS subfamily. As to quaternary structure, homodimer. The cofactor is Mg(2+). It depends on thiamine diphosphate as a cofactor.

The enzyme catalyses D-glyceraldehyde 3-phosphate + pyruvate + H(+) = 1-deoxy-D-xylulose 5-phosphate + CO2. The protein operates within metabolic intermediate biosynthesis; 1-deoxy-D-xylulose 5-phosphate biosynthesis; 1-deoxy-D-xylulose 5-phosphate from D-glyceraldehyde 3-phosphate and pyruvate: step 1/1. In terms of biological role, catalyzes the acyloin condensation reaction between C atoms 2 and 3 of pyruvate and glyceraldehyde 3-phosphate to yield 1-deoxy-D-xylulose-5-phosphate (DXP). This Paenarthrobacter aurescens (strain TC1) protein is 1-deoxy-D-xylulose-5-phosphate synthase.